A 404-amino-acid chain; its full sequence is MKLPIYLDYAATTPVDPRVAEKMMQHMTMDGVFGNPASRSHKYGWQAEEAVDIARNQVADLINADHREIVFTSGATESINLAIKGIAHFYHKKGKHIITSKTEHKAVLDTCRQLEREGYEVTYLEPEANGLIPLARIEDAMRDDTLLVSIMHVNNEIGVIQDVMAIGELCRSKGIIFHMDAAQSAGKLPIDVQQLKVDLISISGHKMYGPKGVGALYVRRKPRIRLESQMHGGGHERGMRSGTLATHQLVGLGEAAAIAKQDMESDNARIRTLRDKLWNGVKHIEETYINGDMEQRFCGSLNVSFNFVEGESLMMALKDLAVSSGSACTSASLEPSYVLRALGLNDEMAHSSIRFSIGRFTTDEDIDHAIKVITQSIDKLREMSPLWEMFKDGIDLDQVQWAHH.

Residues 75–76, asparagine 155, glutamine 183, and 203–205 each bind pyridoxal 5'-phosphate; these read AT and SGH. An N6-(pyridoxal phosphate)lysine modification is found at lysine 206. Residue threonine 243 participates in pyridoxal 5'-phosphate binding. Cysteine 328 functions as the Cysteine persulfide intermediate in the catalytic mechanism. Residue cysteine 328 coordinates [2Fe-2S] cluster.

Belongs to the class-V pyridoxal-phosphate-dependent aminotransferase family. NifS/IscS subfamily. Homodimer. Forms a heterotetramer with IscU, interacts with other sulfur acceptors. Pyridoxal 5'-phosphate serves as cofactor.

The protein localises to the cytoplasm. It catalyses the reaction (sulfur carrier)-H + L-cysteine = (sulfur carrier)-SH + L-alanine. It participates in cofactor biosynthesis; iron-sulfur cluster biosynthesis. Master enzyme that delivers sulfur to a number of partners involved in Fe-S cluster assembly, tRNA modification or cofactor biosynthesis. Catalyzes the removal of elemental sulfur atoms from cysteine to produce alanine. Functions as a sulfur delivery protein for Fe-S cluster synthesis onto IscU, an Fe-S scaffold assembly protein, as well as other S acceptor proteins. This chain is Cysteine desulfurase IscS, found in Shewanella denitrificans (strain OS217 / ATCC BAA-1090 / DSM 15013).